Reading from the N-terminus, the 318-residue chain is MKSLNIIFAGTPDFAAQHLQAILNSQHNVIAVYTQPDKPAGRGKKLQASPVKQLAEQNDIPVYQPKSLRKEEVQSELKALNADVIVVVAYGLILPKVVLDAPRLGCLNVHGSILPRWRGAAPIQRSIWAGDAQTGVTIMQMDEGLDTGDMLHKVYCDILPTETSTSLYNKLAELAPSALIDVLDNLESGKFTAEKQDDSQSNYAEKLSKEEAQLDWSLPAVQLERNIRAFNPWPIAYFSTEDRDGNAQTLKVYQAEVLPHQDKPAGTILSADKNGIQIATVDGVLNLLQLQPAGKKLMSAQDLLNGRAEWFAIGKVLA.

(6S)-5,6,7,8-tetrahydrofolate is bound at residue 112-115 (SILP).

Belongs to the Fmt family.

The enzyme catalyses L-methionyl-tRNA(fMet) + (6R)-10-formyltetrahydrofolate = N-formyl-L-methionyl-tRNA(fMet) + (6S)-5,6,7,8-tetrahydrofolate + H(+). Attaches a formyl group to the free amino group of methionyl-tRNA(fMet). The formyl group appears to play a dual role in the initiator identity of N-formylmethionyl-tRNA by promoting its recognition by IF2 and preventing the misappropriation of this tRNA by the elongation apparatus. The protein is Methionyl-tRNA formyltransferase of Haemophilus influenzae (strain PittEE).